The primary structure comprises 557 residues: Membrane protein insertase YidC (557 aa).

Transmembrane regions (helical) follow at residues 3–23 (IKRT…FDNW), 363–383 (FVGN…AVFF), 437–457 (LPVV…LASV), 476–496 (PYFI…KLNP), and 507–527 (MMFM…GLVL).

Belongs to the OXA1/ALB3/YidC family. Type 1 subfamily. In terms of assembly, interacts with the Sec translocase complex via SecD. Specifically interacts with transmembrane segments of nascent integral membrane proteins during membrane integration.

It is found in the cell inner membrane. Its function is as follows. Required for the insertion and/or proper folding and/or complex formation of integral membrane proteins into the membrane. Involved in integration of membrane proteins that insert both dependently and independently of the Sec translocase complex, as well as at least some lipoproteins. Aids folding of multispanning membrane proteins. This Burkholderia thailandensis (strain ATCC 700388 / DSM 13276 / CCUG 48851 / CIP 106301 / E264) protein is Membrane protein insertase YidC.